The chain runs to 545 residues: Chaperonin GroEL (545 aa).

ATP-binding positions include 30 to 33 (TLGP), lysine 51, 87 to 91 (DGTTT), glycine 413, 477 to 479 (NAA), and aspartate 493.

The protein belongs to the chaperonin (HSP60) family. As to quaternary structure, forms a cylinder of 14 subunits composed of two heptameric rings stacked back-to-back. Interacts with the co-chaperonin GroES.

The protein resides in the cytoplasm. It catalyses the reaction ATP + H2O + a folded polypeptide = ADP + phosphate + an unfolded polypeptide.. In terms of biological role, together with its co-chaperonin GroES, plays an essential role in assisting protein folding. The GroEL-GroES system forms a nano-cage that allows encapsulation of the non-native substrate proteins and provides a physical environment optimized to promote and accelerate protein folding. In Pseudomonas putida (Arthrobacter siderocapsulatus), this protein is Chaperonin GroEL.